A 66-amino-acid chain; its full sequence is DNA-directed RNA polymerase subunit omega (66 aa).

Belongs to the RNA polymerase subunit omega family. The RNAP catalytic core consists of 2 alpha, 1 beta, 1 beta' and 1 omega subunit. When a sigma factor is associated with the core the holoenzyme is formed, which can initiate transcription.

The catalysed reaction is RNA(n) + a ribonucleoside 5'-triphosphate = RNA(n+1) + diphosphate. Functionally, promotes RNA polymerase assembly. Latches the N- and C-terminal regions of the beta' subunit thereby facilitating its interaction with the beta and alpha subunits. This is DNA-directed RNA polymerase subunit omega from Clostridium botulinum (strain Eklund 17B / Type B).